A 317-amino-acid polypeptide reads, in one-letter code: Protein phosphatase 1 regulatory subunit 3C (317 aa).

A PP1-binding motif motif is present at residues 84 to 87; it reads RVVF. The segment at 141–263 is interaction with EPM2A; the sequence is PSSDYLSFRD…YRIVHVQWKP (123 aa). The 109-residue stretch at 149 to 257 folds into the CBM21 domain; sequence RDRFQKNFVC…NNEAQNYRIV (109 aa).

In terms of assembly, interacts with PPP1CC catalytic subunit of PP1 and associates with glycogen. Forms complexes with glycogen phosphorylase, glycogen synthase and phosphorylase kinase which is necessary for its regulation of PP1 activity. Also interacts with EPM2A/laforin. In terms of processing, ubiquitinated by NHLRC1/malin in a EPM2A/laforin-dependent manner.

In terms of biological role, acts as a glycogen-targeting subunit for PP1 and regulates its activity. Activates glycogen synthase, reduces glycogen phosphorylase activity and limits glycogen breakdown. Dramatically increases basal and insulin-stimulated glycogen synthesis upon overexpression in a variety of cell types. In Rattus norvegicus (Rat), this protein is Protein phosphatase 1 regulatory subunit 3C.